A 430-amino-acid polypeptide reads, in one-letter code: Serine--tRNA ligase (430 aa).

238-240 (TAE) is a binding site for L-serine. 269–271 (RRE) lines the ATP pocket. L-serine is bound at residue Glu-292. Residue 356–359 (EISS) participates in ATP binding. An L-serine-binding site is contributed by Ser-392.

Belongs to the class-II aminoacyl-tRNA synthetase family. Type-1 seryl-tRNA synthetase subfamily. In terms of assembly, homodimer. The tRNA molecule binds across the dimer.

The protein localises to the cytoplasm. It carries out the reaction tRNA(Ser) + L-serine + ATP = L-seryl-tRNA(Ser) + AMP + diphosphate + H(+). The catalysed reaction is tRNA(Sec) + L-serine + ATP = L-seryl-tRNA(Sec) + AMP + diphosphate + H(+). It functions in the pathway aminoacyl-tRNA biosynthesis; selenocysteinyl-tRNA(Sec) biosynthesis; L-seryl-tRNA(Sec) from L-serine and tRNA(Sec): step 1/1. Catalyzes the attachment of serine to tRNA(Ser). Is also able to aminoacylate tRNA(Sec) with serine, to form the misacylated tRNA L-seryl-tRNA(Sec), which will be further converted into selenocysteinyl-tRNA(Sec). The sequence is that of Serine--tRNA ligase from Synechocystis sp. (strain ATCC 27184 / PCC 6803 / Kazusa).